Reading from the N-terminus, the 327-residue chain is uncharacterized protein (327 aa).

The segment at 129–306 (TPLQNQEATT…DNKKTVTTSS (178 aa)) is disordered. Positions 130-144 (PLQNQEATTSPTIES) are enriched in polar residues. Basic and acidic residues-rich tracts occupy residues 184 to 196 (KSVE…DRNV) and 233 to 276 (TKDE…EKIV).

This is an uncharacterized protein from Caenorhabditis elegans.